The sequence spans 518 residues: DNA nucleotidylexotransferase (518 aa).

The Nuclear localization signal signature appears at 11 to 17 (FGKKRQK). A BRCT domain is found at 27–124 (IYEIKFHEFV…KPVDTKGKYQ (98 aa)). The segment at 153–518 (SQYACQRRTT…EYIQPSERNA (366 aa)) is mediates interaction with DNTTIP2. The interval 260–264 (VGLKT) is involved in DNA binding. Residues 335 to 340 (GFRRGK) and 344 to 347 (HDVD) each bind a 2'-deoxyribonucleoside 5'-triphosphate. Mg(2+)-binding residues include Asp-345, Asp-347, and Asp-442. Residue 457–458 (GW) coordinates a 2'-deoxyribonucleoside 5'-triphosphate.

This sequence belongs to the DNA polymerase type-X family. In terms of assembly, interacts with PRP19 and DNTTIP1. Interacts with TRERF1. Forms a ternary complex with DNTTIP2 and core histone. Released from this complex by PCNA. The cofactor is Mg(2+).

Its subcellular location is the nucleus. The catalysed reaction is DNA(n) + a 2'-deoxyribonucleoside 5'-triphosphate = DNA(n+1) + diphosphate. Template-independent DNA polymerase which catalyzes the random addition of deoxynucleoside 5'-triphosphate to the 3'-end of a DNA initiator. One of the in vivo functions of this enzyme is the addition of nucleotides at the junction (N region) of rearranged Ig heavy chain and T-cell receptor gene segments during the maturation of B- and T-cells. In Monodelphis domestica (Gray short-tailed opossum), this protein is DNA nucleotidylexotransferase (DNTT).